Consider the following 471-residue polypeptide: ATP synthase subunit beta (471 aa).

153-160 serves as a coordination point for ATP; that stretch reads GGAGVGKT.

This sequence belongs to the ATPase alpha/beta chains family. F-type ATPases have 2 components, CF(1) - the catalytic core - and CF(0) - the membrane proton channel. CF(1) has five subunits: alpha(3), beta(3), gamma(1), delta(1), epsilon(1). CF(0) has three main subunits: a(1), b(2) and c(9-12). The alpha and beta chains form an alternating ring which encloses part of the gamma chain. CF(1) is attached to CF(0) by a central stalk formed by the gamma and epsilon chains, while a peripheral stalk is formed by the delta and b chains.

The protein localises to the cell membrane. It carries out the reaction ATP + H2O + 4 H(+)(in) = ADP + phosphate + 5 H(+)(out). Functionally, produces ATP from ADP in the presence of a proton gradient across the membrane. The catalytic sites are hosted primarily by the beta subunits. In Levilactobacillus brevis (strain ATCC 367 / BCRC 12310 / CIP 105137 / JCM 1170 / LMG 11437 / NCIMB 947 / NCTC 947) (Lactobacillus brevis), this protein is ATP synthase subunit beta.